We begin with the raw amino-acid sequence, 576 residues long: Malonate--CoA ligase ACSF3, mitochondrial (576 aa).

Residues 1 to 83 constitute a mitochondrion transit peptide; sequence MLPHVVLTFR…RSLRLSQEIC (83 aa). ATP is bound by residues 202-210, Asp457, Arg471, and Lys563; that span reads TSGTTGRPK.

The protein belongs to the ATP-dependent AMP-binding enzyme family.

It is found in the mitochondrion. The enzyme catalyses tetracosanoate + ATP + CoA = tetracosanoyl-CoA + AMP + diphosphate. It catalyses the reaction malonate + ATP + CoA = malonyl-CoA + AMP + diphosphate. Its function is as follows. Catalyzes the initial reaction in intramitochondrial fatty acid synthesis, by activating malonate and methylmalonate, but not acetate, into their respective CoA thioester. May have some preference toward very-long-chain substrates. This is Malonate--CoA ligase ACSF3, mitochondrial from Homo sapiens (Human).